Reading from the N-terminus, the 796-residue chain is Bud site selection protein 27 (796 aa).

Residues 81–121 (KEEAITFVDDKLKLMEDAIEQFNLKIEEAKKTLDNLNHMED) are a coiled coil. The span at 152-168 (VISSSVTPTTKQPSQSN) shows a compositional bias: polar residues. Disordered regions lie at residues 152–197 (VISS…EENL), 300–344 (LRAQ…QVGF), 421–458 (EGEA…TTRS), 535–624 (EKEP…AKTG), and 752–796 (ATAS…DSKP). Basic and acidic residues-rich tracts occupy residues 169–197 (SKKE…EENL) and 306–318 (SQDH…DVNK). The span at 427–441 (SNRRTRVSRFRKDRA) shows a compositional bias: basic residues. Residues 535–550 (EKEPEINSKSEFETPF) show a composition bias toward basic and acidic residues. A compositionally biased stretch (basic residues) spans 551–568 (KKKKLKSLQKPRSSKSMK). Residues 579 to 589 (ISDDDYDDDDD) are compositionally biased toward acidic residues. At S580 the chain carries Phosphoserine. Positions 601–610 (NNTDEQDKFP) are enriched in basic and acidic residues.

Belongs to the prefoldin subunit alpha family.

It localises to the cytoplasm. Functionally, involved in gene expression controlled by TOR kinase and nutrient signaling. May also be involved in positioning the proximal bud pole signal. The sequence is that of Bud site selection protein 27 (BUD27) from Saccharomyces cerevisiae (strain ATCC 204508 / S288c) (Baker's yeast).